The primary structure comprises 348 residues: Selenide, water dikinase (348 aa).

Residue C17 is part of the active site. ATP contacts are provided by residues K20 and 47 to 49; that span reads RAD. A Mg(2+)-binding site is contributed by D50. ATP contacts are provided by residues D67, D90, and 138–140; that span reads GHT. Position 90 (D90) interacts with Mg(2+). D226 provides a ligand contact to Mg(2+).

It belongs to the selenophosphate synthase 1 family. Class I subfamily. As to quaternary structure, homodimer. Mg(2+) is required as a cofactor.

It catalyses the reaction hydrogenselenide + ATP + H2O = selenophosphate + AMP + phosphate + 2 H(+). Synthesizes selenophosphate from selenide and ATP. The chain is Selenide, water dikinase from Pelobacter propionicus (strain DSM 2379 / NBRC 103807 / OttBd1).